The primary structure comprises 482 residues: Methylenetetrahydrofolate--tRNA-(uracil-5-)-methyltransferase TrmFO (482 aa).

11-16 (GGGLAG) is an FAD binding site. The tract at residues 450–482 (LRQPSPWSAEDSPRAALPIPEPTPLGPASGSSE) is disordered.

It belongs to the MnmG family. TrmFO subfamily. Requires FAD as cofactor.

Its subcellular location is the cytoplasm. It carries out the reaction uridine(54) in tRNA + (6R)-5,10-methylene-5,6,7,8-tetrahydrofolate + NADH + H(+) = 5-methyluridine(54) in tRNA + (6S)-5,6,7,8-tetrahydrofolate + NAD(+). It catalyses the reaction uridine(54) in tRNA + (6R)-5,10-methylene-5,6,7,8-tetrahydrofolate + NADPH + H(+) = 5-methyluridine(54) in tRNA + (6S)-5,6,7,8-tetrahydrofolate + NADP(+). Functionally, catalyzes the folate-dependent formation of 5-methyl-uridine at position 54 (M-5-U54) in all tRNAs. This chain is Methylenetetrahydrofolate--tRNA-(uracil-5-)-methyltransferase TrmFO, found in Rhodospirillum rubrum (strain ATCC 11170 / ATH 1.1.1 / DSM 467 / LMG 4362 / NCIMB 8255 / S1).